We begin with the raw amino-acid sequence, 124 residues long: MPTIQQLIRSKRTKIEKKTKSPALKACPQRRGVCTRVYTTTPKKPNSALRKVARVRLTSGFEVTAYIPGIGHNLQEHSVVLVRGGRVKDLPGVRYHIVRGALDAAGVKDRRQSRSKYGAKRPKA.

The tract at residues 105-124 (AGVKDRRQSRSKYGAKRPKA) is disordered. The span at 113-124 (SRSKYGAKRPKA) shows a compositional bias: basic residues.

The protein belongs to the universal ribosomal protein uS12 family. As to quaternary structure, part of the 30S ribosomal subunit.

Its subcellular location is the plastid. It is found in the cyanelle. Its function is as follows. With S4 and S5 plays an important role in translational accuracy. Located at the interface of the 30S and 50S subunits. This chain is Small ribosomal subunit protein uS12c (rps12), found in Cyanophora paradoxa.